The primary structure comprises 337 residues: Outer membrane protein assembly factor BamC (337 aa).

An N-terminal signal peptide occupies residues methionine 1–glycine 16. A lipid anchor (N-palmitoyl cysteine) is attached at cysteine 17. A lipid anchor (S-diacylglycerol cysteine) is attached at cysteine 17.

It belongs to the BamC family. In terms of assembly, part of the Bam complex.

It is found in the cell outer membrane. Part of the outer membrane protein assembly complex, which is involved in assembly and insertion of beta-barrel proteins into the outer membrane. This is Outer membrane protein assembly factor BamC from Pasteurella multocida (strain Pm70).